The primary structure comprises 237 residues: MSQLNVDLQEIAKFEALAAKWWDQHSEFRPLHQINPLRLNWIDERAGGLAGKKVLDVGCGGGILAESMARRGADVLGIDMGEAPLAVGRLHAQQENVQNIEYRQIPVEELAQEQAGQYDVVTCMEMMEHVPDPASIVKACQTLVKPGGHVFFSTINRNPKSYLFAIIGAEYVLRMLPKGTHDYHKFIRPSEMAHDIRNAGLTLKEMTGLHYNPITKRYWLAPNVDVNYMVHTIKTGV.

Arg-38, Gly-58, Asp-79, and Met-124 together coordinate S-adenosyl-L-methionine.

This sequence belongs to the methyltransferase superfamily. UbiG/COQ3 family.

The enzyme catalyses a 3-demethylubiquinol + S-adenosyl-L-methionine = a ubiquinol + S-adenosyl-L-homocysteine + H(+). It catalyses the reaction a 3-(all-trans-polyprenyl)benzene-1,2-diol + S-adenosyl-L-methionine = a 2-methoxy-6-(all-trans-polyprenyl)phenol + S-adenosyl-L-homocysteine + H(+). It functions in the pathway cofactor biosynthesis; ubiquinone biosynthesis. O-methyltransferase that catalyzes the 2 O-methylation steps in the ubiquinone biosynthetic pathway. The sequence is that of Ubiquinone biosynthesis O-methyltransferase from Acinetobacter baumannii (strain SDF).